The chain runs to 180 residues: Hypoxanthine-guanine phosphoribosyltransferase (180 aa).

The diphosphate site is built by K43 and G44. 2 residues coordinate Mg(2+): E99 and D100. D103 (proton acceptor) is an active-site residue. GMP contacts are provided by residues K131, 152 to 153 (FI), and D159. Diphosphate is bound at residue R165.

It belongs to the purine/pyrimidine phosphoribosyltransferase family. Mg(2+) serves as cofactor.

It is found in the cytoplasm. The enzyme catalyses IMP + diphosphate = hypoxanthine + 5-phospho-alpha-D-ribose 1-diphosphate. It catalyses the reaction GMP + diphosphate = guanine + 5-phospho-alpha-D-ribose 1-diphosphate. Its pathway is purine metabolism; IMP biosynthesis via salvage pathway; IMP from hypoxanthine: step 1/1. It participates in purine metabolism; GMP biosynthesis via salvage pathway; GMP from guanine: step 1/1. Its function is as follows. Purine salvage pathway enzyme that catalyzes the transfer of the ribosyl-5-phosphate group from 5-phospho-alpha-D-ribose 1-diphosphate (PRPP) to the N9 position of the 6-oxopurines hypoxanthine and guanine to form the corresponding ribonucleotides IMP (inosine 5'-monophosphate) and GMP (guanosine 5'-monophosphate), with the release of PPi. The protein is Hypoxanthine-guanine phosphoribosyltransferase (hpt) of Streptococcus pyogenes serotype M3 (strain ATCC BAA-595 / MGAS315).